The chain runs to 350 residues: Melatonin receptor type 1A-A (350 aa).

The Extracellular portion of the chain corresponds to 1–29; it reads MFMNGSSLNSSALDPSEQALQRPPWVTTT. N-linked (GlcNAc...) asparagine glycosylation is found at asparagine 4 and asparagine 9. The helical transmembrane segment at 30–50 threads the bilayer; it reads LGCFLIFTIVVDILGNLLVIF. At 51 to 63 the chain is on the cytoplasmic side; sequence SVYRNKKLQNAGN. A helical membrane pass occupies residues 64–84; the sequence is IFVVSLAVADLVVAIYPYPLV. Topologically, residues 85-101 are extracellular; sequence LTSIFHRGWNLGYMHCQ. A disulfide bridge links cysteine 100 with cysteine 177. Residues 102 to 122 traverse the membrane as a helical segment; it reads ISGFLMGVSVIGSIFNITGIA. Residues 123 to 144 lie on the Cytoplasmic side of the membrane; that stretch reads INCYCYICHSLKYDKLYSDKNS. Residues 145–165 form a helical membrane-spanning segment; the sequence is VCYVLLIWALTVLAIVPNLFV. The Extracellular portion of the chain corresponds to 166-187; it reads GSLQYDPRVYSCTFEQSASSAY. Residues 188–208 form a helical membrane-spanning segment; it reads TIAVVFFHFILPIMIVTYCYL. At 209 to 240 the chain is on the cytoplasmic side; that stretch reads RIWVLVIQVRRRVKNDNRPKITPHDVRNFVTM. A helical transmembrane segment spans residues 241-261; that stretch reads FVVFVLFAVCWAPLNFIGLAV. The Extracellular segment spans residues 262–267; that stretch reads AISPER. The helical transmembrane segment at 268–288 threads the bilayer; the sequence is VVPLIPEWLFVASYFMAYFNS. Over 289–350 the chain is Cytoplasmic; sequence CLNAIVYGVL…NNNQVKVDSV (62 aa).

This sequence belongs to the G-protein coupled receptor 1 family.

It is found in the cell membrane. High affinity receptor for melatonin. The activity of this receptor is mediated by pertussis toxin sensitive G proteins that inhibits adenylate cyclase activity. The protein is Melatonin receptor type 1A-A (mtnr1aa) of Danio rerio (Zebrafish).